A 422-amino-acid chain; its full sequence is Adhesin YadA (422 aa).

An N-terminal signal peptide occupies residues 1-25 (MTKDFKISVSAALISALFSSPYAFA). A surface exposed passenger domain region spans residues 26 to 330 (NNDEVHFTAV…KKAIRESNQY (305 aa)). Residues 206 to 236 (VNVAQLKKEIEKTQVNANKKSAEVLGIANNY) are a coiled coil. The tract at residues 331–368 (TDHKFRQLDNRLDKLDTRVDKGLASSAALNSLFQPYGV) is outer membrane translocation of the passenger domain. A run of 4 beta stranded transmembrane segments spans residues 369-379 (GKVNFTAGVGG), 383-394 (SQALAIGSGYRV), 401-407 (KAGVAYA), and 411-422 (DVMYNASFNIEW). Residues 369-422 (GKVNFTAGVGGYRSSQALAIGSGYRVNESVALKAGVAYAGSSDVMYNASFNIEW) are translocator domain.

Belongs to the autotransporter-2 (AT-2) (TC 1.B.40) family. As to quaternary structure, homotrimer; trimers are very stable, not disrupted by heating at 95 degrees Celsius for 10 minutes in SDS sample buffer.

It is found in the cell surface. Its subcellular location is the cell outer membrane. Functionally, collagen-binding outer membrane protein forming a fibrillar matrix on the bacterial cell surface and phagocytosis resistance. Promotes initial attachment and invasion of eukaryotic cells. Also protects the bacteria by being responsible for agglutination, serum resistance and complement inactivation. Gly-389 plays an important role in this protein; replacing it with increasingly large polar residues decreases expression levels and trimer stability. Residues larger than Ser (Thr, Asn or His) significantly decrease serume resistance and bacterial autoagglution without affecting adhesion to host cells or host cell cytokine production. In Yersinia enterocolitica serotype O:8 / biotype 1B (strain NCTC 13174 / 8081), this protein is Adhesin YadA.